The following is a 324-amino-acid chain: Thiazole synthase (324 aa).

Lysine 167 (schiff-base intermediate with DXP) is an active-site residue. 1-deoxy-D-xylulose 5-phosphate-binding positions include glycine 228, 254–255 (AG), and 276–277 (NT).

The protein belongs to the ThiG family. Homotetramer. Forms heterodimers with either ThiH or ThiS.

It is found in the cytoplasm. It carries out the reaction [ThiS sulfur-carrier protein]-C-terminal-Gly-aminoethanethioate + 2-iminoacetate + 1-deoxy-D-xylulose 5-phosphate = [ThiS sulfur-carrier protein]-C-terminal Gly-Gly + 2-[(2R,5Z)-2-carboxy-4-methylthiazol-5(2H)-ylidene]ethyl phosphate + 2 H2O + H(+). The protein operates within cofactor biosynthesis; thiamine diphosphate biosynthesis. In terms of biological role, catalyzes the rearrangement of 1-deoxy-D-xylulose 5-phosphate (DXP) to produce the thiazole phosphate moiety of thiamine. Sulfur is provided by the thiocarboxylate moiety of the carrier protein ThiS. In vitro, sulfur can be provided by H(2)S. This is Thiazole synthase from Paramagnetospirillum magneticum (strain ATCC 700264 / AMB-1) (Magnetospirillum magneticum).